A 104-amino-acid polypeptide reads, in one-letter code: Large ribosomal subunit protein uL24 (104 aa).

This sequence belongs to the universal ribosomal protein uL24 family. As to quaternary structure, part of the 50S ribosomal subunit.

In terms of biological role, one of two assembly initiator proteins, it binds directly to the 5'-end of the 23S rRNA, where it nucleates assembly of the 50S subunit. Functionally, one of the proteins that surrounds the polypeptide exit tunnel on the outside of the subunit. The polypeptide is Large ribosomal subunit protein uL24 (Treponema denticola (strain ATCC 35405 / DSM 14222 / CIP 103919 / JCM 8153 / KCTC 15104)).